Here is a 469-residue protein sequence, read N- to C-terminus: Transcriptional coactivator YAP1 (469 aa).

Pro residues predominate over residues 1–21 (MEPAQQPPPQPAPQGPAPPSV). The tract at residues 1-47 (MEPAQQPPPQPAPQGPAPPSVSPAGTPAAPPAPPAGHQVVHVRGDSE) is disordered. Position 46 is a phosphoserine (Ser46). Phosphothreonine is present on Thr48. The stretch at 71–85 (MRLRKLPDSFFKPPE) forms a coiled coil. Lys75 is subject to N6-lactoyllysine. The interval 76–99 (LPDSFFKPPEPKSHSRQASTDAGT) is disordered. A phosphoserine mark is found at Ser90 and Ser94. Residues Thr95 and Thr104 each carry the phosphothreonine modification. Ser112 carries the phosphoserine; by LATS1 and LATS2 modification. Phosphoserine occurs at positions 113 and 116. Residue Thr136 is modified to Phosphothreonine; by MAPK8 and MAPK9. Phosphoserine; by LATS1 and LATS2 is present on Ser146. WW domains lie at 153 to 186 (VPLP…DPRK) and 212 to 245 (GPLP…DPRL). The interval 258–290 (SAPVKQPPPLAPQSPQGGVLGGGSSNQQQQIQL) is disordered. Residues Ser271 and Ser320 each carry the phosphoserine modification. Positions 273–469 (QGGVLGGGSS…LDKESFLTWL (197 aa)) are transactivation domain. Residues 280–325 (GSSNQQQQIQLQQLQMEKERLRLKQQELFRQELALRSQLPSLEQDG) are a coiled coil. Position 333 is a phosphoserine; by MAPK8 and MAPK9 (Ser333). Positions 345 to 357 (TNSSDPFLNSGTY) are enriched in polar residues. Residues 345–405 (TNSSDPFLNS…SQSTLPSQQS (61 aa)) form a disordered region. Phosphoserine occurs at positions 347, 348, and 354. Ser363 carries the phosphoserine; by LATS1 and LATS2 modification. Residues 365 to 375 (DSGLSMSSYSI) show a composition bias toward polar residues. A phosphoserine; by CK1 mark is found at Ser366 and Ser369. Phosphotyrosine; by ABL1 is present on Tyr373. Residue Thr378 is modified to Phosphothreonine; by MAPK8 and MAPK9. Polar residues predominate over residues 393-405 (DTISQSTLPSQQS).

Belongs to the YAP1 family. As to quaternary structure, part of a complex when phosphorylated that contains DSG3, PKP1, YAP1 and YWHAG; the complex is required for localization of DSG3 and YAP1 to the cell membrane in keratinocytes. Binds to the SH3 domain of the YES kinase. Binds to WBP1 and WBP2. Binds, in vitro, through the WW1 domain, to neural isoforms of ENAH that contain the PPSY motif. The phosphorylated form interacts with YWHAB. Interacts (via WW domains) with LATS1 (via PPxY motif 2). Interacts with LATS2. Interacts (via WW domain 1) with ERBB4 (via PPxY motif 2). Interacts with TEAD1, TEAD2, TEAD3 and TEAD4. Interacts with TP73. Interacts with RUNX1. Interacts with HCK. Interacts (via WW domains) with PTPN14 (via PPxY motif 2); this interaction leads to the cytoplasmic sequestration of YAP1 and inhibits its transcriptional coactivator activity. Interacts (when phosphorylated at Ser-112) with SMAD2, SMAD3 and WWTR1. Interacts with PRRG2 (via cytoplasmic domain). Interacts (via WW domains) with PRRG4 (via cytoplasmic domain). Interacts (phosphorylated) with CLDN18; the interaction sequesters YAP1 away from the nucleus and thereby restricts transcription of YAP1 target genes. Interacts with SMAD1. Interacts with AMOT; the interaction facilitates translocation of YAP1 to the cytoplasm and tight junctions. Interacts with AMOTL2, the interaction is required for ubiquitination of AMOTL2 and localization of YAP1 to tight junctions. In terms of processing, phosphorylated by LATS1 and LATS2; leading to cytoplasmic translocation and inactivation. Phosphorylated by ABL1; leading to YAP1 stabilization, enhanced interaction with TP73 and recruitment onto proapoptotic genes; in response to DNA damage. Phosphorylation at Ser-366 and Ser-369 by CK1 is triggered by previous phosphorylation at Ser-363 by LATS proteins and leads to YAP1 ubiquitination by SCF(beta-TRCP) E3 ubiquitin ligase and subsequent degradation. Phosphorylated at Thr-104, Thr-136, Ser-333 and Thr-378 by MAPK8/JNK1 and MAPK9/JNK2, which is required for the regulation of apoptosis by YAP1. Post-translationally, lactylation by AARS1 promotes nuclear localization and stabilization of YAP1, leading to increased Hippo signaling pathway. Delactylated by SIRT1. Ubiquitinated by SCF(beta-TRCP) E3 ubiquitin ligase. As to expression, highly specific to cortical neurons.

The protein resides in the cytoplasm. Its subcellular location is the nucleus. It localises to the cell junction. It is found in the tight junction. The protein localises to the cell membrane. In terms of biological role, transcriptional regulator with dual roles as a coactivator and corepressor. Critical downstream regulatory target in the Hippo signaling pathway, crucial for organ size control and tumor suppression by restricting proliferation and promoting apoptosis. The Hippo signaling pathway core involves a kinase cascade featuring STK3/MST2 and STK4/MST1, along with its regulatory partner SAV1, which phosphorylates and activates LATS1/2 in complex with their regulatory protein, MOB1. This activation leads to the phosphorylation and inactivation of the YAP1 oncoprotein and WWTR1/TAZ. Phosphorylation of YAP1 by LATS1/2 prevents its nuclear translocation, thereby regulating the expression of its target genes. The transcriptional regulation of gene expression requires TEAD transcription factors and modulates cell growth, anchorage-independent growth, and induction of epithelial-mesenchymal transition (EMT). Plays a key role in tissue tension and 3D tissue shape by regulating the cortical actomyosin network, acting via ARHGAP18, a Rho GTPase activating protein that suppresses F-actin polymerization. It also suppresses ciliogenesis by acting as a transcriptional corepressor of TEAD4 target genes AURKA and PLK1. In conjunction with WWTR1, regulates TGFB1-dependent SMAD2 and SMAD3 nuclear accumulation. Synergizes with WBP2 to enhance PGR activity. Its function is as follows. Attenuates p73-mediated cell death signaling in transcriptional repression-induced atypical death (TRIAD) of neurons. This is Transcriptional coactivator YAP1 (Yap1) from Rattus norvegicus (Rat).